Consider the following 180-residue polypeptide: Shikimate kinase (180 aa).

14-19 (GAGKST) is a binding site for ATP. Position 18 (Ser-18) interacts with Mg(2+). Residues Asp-36, Arg-60, and Gly-82 each coordinate substrate. Arg-120 is an ATP binding site. Arg-139 contributes to the substrate binding site.

The protein belongs to the shikimate kinase family. In terms of assembly, monomer. Requires Mg(2+) as cofactor.

It localises to the cytoplasm. It carries out the reaction shikimate + ATP = 3-phosphoshikimate + ADP + H(+). The protein operates within metabolic intermediate biosynthesis; chorismate biosynthesis; chorismate from D-erythrose 4-phosphate and phosphoenolpyruvate: step 5/7. Its function is as follows. Catalyzes the specific phosphorylation of the 3-hydroxyl group of shikimic acid using ATP as a cosubstrate. This chain is Shikimate kinase, found in Chromohalobacter salexigens (strain ATCC BAA-138 / DSM 3043 / CIP 106854 / NCIMB 13768 / 1H11).